The following is a 441-amino-acid chain: uncharacterized protein (441 aa).

This is an uncharacterized protein from Ictalurid herpesvirus 1 (strain Auburn) (IcHV-1).